The primary structure comprises 221 residues: Small ribosomal subunit protein uS3 (221 aa).

In terms of domain architecture, KH type-2 spans 39 to 107; sequence IRNYIKEKLY…TVILNIIEVK (69 aa).

The protein belongs to the universal ribosomal protein uS3 family. Part of the 30S ribosomal subunit. Forms a tight complex with proteins S10 and S14.

Functionally, binds the lower part of the 30S subunit head. Binds mRNA in the 70S ribosome, positioning it for translation. This Caldanaerobacter subterraneus subsp. tengcongensis (strain DSM 15242 / JCM 11007 / NBRC 100824 / MB4) (Thermoanaerobacter tengcongensis) protein is Small ribosomal subunit protein uS3.